A 355-amino-acid polypeptide reads, in one-letter code: Galectin-9 (355 aa).

Galectin domains lie at 17 to 148 (FTGM…ISFQ) and 227 to 355 (FFTS…HVQT). Residues asparagine 48, histidine 61, arginine 65, asparagine 75, 82–88 (WGTEERK), histidine 267, arginine 271, threonine 281, and 287–293 (WGSEERS) each bind a beta-D-galactoside.

It localises to the cytoplasm. The protein resides in the nucleus. Its subcellular location is the secreted. Its function is as follows. Binds galactosides. Has high affinity for the Forssman pentasaccharide. Ligand for HAVCR2/TIM3. Binding to HAVCR2 induces T-helper type 1 lymphocyte (Th1) death. Also stimulates bactericidal activity in infected macrophages by causing macrophage activation and IL1B secretion which restricts intracellular bacterial growth. Ligand for P4HB; the interaction retains P4HB at the cell surface of Th2 T helper cells, increasing disulfide reductase activity at the plasma membrane, altering the plasma membrane redox state and enhancing cell migration. Ligand for CD44; the interaction enhances binding of SMAD3 to the FOXP3 promoter, leading to up-regulation of FOXP3 expression and increased induced regulatory T (iTreg) cell stability and suppressive function. Promotes ability of mesenchymal stromal cells to suppress T-cell proliferation. Expands regulatory T-cells and induces cytotoxic T-cell apoptosis following virus infection. Activates ERK1/2 phosphorylation inducing cytokine (IL-6, IL-8, IL-12) and chemokine (CCL2) production in mast and dendritic cells. Inhibits degranulation and induces apoptosis of mast cells. Induces maturation and migration of dendritic cells. Inhibits natural killer (NK) cell function. Can transform NK cell phenotype from peripheral to decidual during pregnancy. Astrocyte derived galectin-9 enhances microglial TNF production. May play a role in thymocyte-epithelial interactions relevant to the biology of the thymus. May provide the molecular basis for urate flux across cell membranes, allowing urate that is formed during purine metabolism to efflux from cells and serving as an electrogenic transporter that plays an important role in renal and gastrointestinal urate excretion. Highly selective to the anion urate. The protein is Galectin-9 (LGALS9) of Bos taurus (Bovine).